Reading from the N-terminus, the 219-residue chain is Vesicle-associated membrane protein 721 (219 aa).

The Cytoplasmic segment spans residues 1–196; that stretch reads MAQQSLIYSF…MWLQNMKIKL (196 aa). In terms of domain architecture, Longin spans 10–114; it reads FVARGTVILV…SLNKEFGSKL (105 aa). One can recognise a v-SNARE coiled-coil homology domain in the interval 130-190; the sequence is KLAKVKAQVS…TQMRRKMWLQ (61 aa). A helical; Anchor for type IV membrane protein membrane pass occupies residues 197–217; that stretch reads IVLAIIIALILIIVLSVCHGF. The Vesicular portion of the chain corresponds to 218–219; it reads KC.

The protein belongs to the synaptobrevin family. In terms of tissue distribution, expressed in flowers, leaves, stems and roots.

The protein resides in the cell membrane. Its subcellular location is the early endosome membrane. Involved in the targeting and/or fusion of transport vesicles to their target membrane. This is Vesicle-associated membrane protein 721 from Arabidopsis thaliana (Mouse-ear cress).